Here is a 451-residue protein sequence, read N- to C-terminus: MFKTLYSRIAIYAITVILFSALMSFLFTNIYYHFHLKASNDAKIMRTLKEAREYERTQKPKPLDTYLKHLGQMNYQIMTVNEHGTKHFYGETFRKNTISQSAIKKVLNGEDYHGIKNKPYAFFVTGFFDNETDNTVGIQFKTDDGALAVFMRPDIGETFSEFRIFLAVLITLLLIISISLVIASTYSIIKPVTALKNATTRIMKGDFSTPIKQTRHDEIGTLQSRFNTMRQNLGQVDQMRQHFVQNVSHEVKTPLTHLQRLLTQLELTQNEEEKQLCINEMFEITNQVSELTKELLLLSELDNASHLTFNDNVHLNTLIKDIIRHEQFRTDEKDLVMFTELEDLYFRGNERLLHQAFNNLIINAMNYAPQNSMINITLTSTNHLIIFNIENDGSIAEEDAKHIFDRFYKLSDESSSNGLGLAITQSIIHLHHGSITLTSDDKTQFIVKLFI.

The next 2 membrane-spanning stretches (helical) occupy residues 9–29 (IAIYAITVILFSALMSFLFTN) and 164–184 (IFLAVLITLLLIISISLVIAS). An HAMP domain is found at 186–238 (YSIIKPVTALKNATTRIMKGDFSTPIKQTRHDEIGTLQSRFNTMRQNLGQVDQ). The Histidine kinase domain maps to 246–451 (NVSHEVKTPL…KTQFIVKLFI (206 aa)). The residue at position 249 (histidine 249) is a Phosphohistidine; by autocatalysis.

In terms of processing, autophosphorylated.

The protein localises to the cell membrane. The catalysed reaction is ATP + protein L-histidine = ADP + protein N-phospho-L-histidine.. Functionally, member of the two-component regulatory system HssS/HssR involved in intracellular heme homeostasis and tempering of staphylococcal virulence. HssS functions as a heme sensor histidine kinase which is autophosphorylated at a histidine residue and transfers its phosphate group to an aspartate residue of HssR. HssR/HssS activates the expression of HrtAB, an efflux pump, in response to extracellular heme, hemin, hemoglobin or blood. The polypeptide is Heme sensor protein HssS (hssS) (Staphylococcus epidermidis (strain ATCC 35984 / DSM 28319 / BCRC 17069 / CCUG 31568 / BM 3577 / RP62A)).